The primary structure comprises 627 residues: BEL1-like homeodomain protein 4 (627 aa).

Residues 206–225 (SSQHHHHQVVGHFGSSSSSP) are disordered. Residues 215–225 (VGHFGSSSSSP) are compositionally biased toward low complexity. The segment at 241-257 (SKYTKPAQELLEEFCSV) is SR/KY domain. Positions 263–307 (KKNKLSRNNSNPNTTGGGGGGGSSSSAGTANDSPPLSPADRIEHQ) are disordered. Residues 302–373 (DRIEHQRRKV…CLKDAVAVQL (72 aa)) form a BELL domain region. Residues 424–486 (AWRPQRGLPE…NARVRLWKPM (63 aa)) constitute a DNA-binding region (homeobox). The segment at 494-530 (EAKEREEAEEENENQQQQRRQQQTNNNDTKPNNNENN) is disordered. Low complexity predominate over residues 507-530 (NQQQQRRQQQTNNNDTKPNNNENN).

The protein belongs to the TALE/BELL homeobox family. May form heterodimeric complexes with TALE/KNOX proteins. Interacts with OFP1, OFP2 and OFP5. Interacts with KNATM, isoform KNATM-B. In terms of tissue distribution, expressed in lateral organs.

It localises to the nucleus. Its function is as follows. Transcription factor that establishes leaf shape by repressing growth in specific subdomains of the leaf. Negatively regulates knox homeobox gene KNAT1/BP expression. The polypeptide is BEL1-like homeodomain protein 4 (BLH4) (Arabidopsis thaliana (Mouse-ear cress)).